We begin with the raw amino-acid sequence, 190 residues long: Elongation factor P-like protein (190 aa).

This sequence belongs to the elongation factor P family.

This chain is Elongation factor P-like protein, found in Psychromonas ingrahamii (strain DSM 17664 / CCUG 51855 / 37).